A 492-amino-acid polypeptide reads, in one-letter code: MQEAPAALPTEPGPSPVPAFLGKLWALVGDPGTDHLIRWSPSGTSFLVSDQSRFAKEVLPQYFKHSNMASFVRQLNMYGFRKVVSIEQGGLLRPERDHVEFQHPSFVRGREQLLERVRRKVPALRGDDGRWRPEDLGRLLGEVQALRGVQESTEARLRELRQQNEILWREVVTLRQSHGQQHRVIGKLIQCLFGPLQAGPSNAGGKRKLSLMLDEGSSCPTPAKFNTCPLPGALLQDPYFIQSPLPETNLGLSPHRARGPIISDIPEDSPSPEGTRLSPSSDGRREKGLALLKEEPASPGGDGEAGLALAPNECDFCVTAPPPLPVAVVQAILEGKGSFSPEGPRNAQQPEPGDPREIPDRGPLGLESGDRSPESLLPPMLLQPPQESVEPAGPLDVLGPSLQGREWTLMDLDMELSLMQPLVPERGEPELAVKGLNSPSPGKDPTLGAPLLLDVQAALGGPALGLPGALTIYSTPESRTASYLGPEASPSP.

Residues 17–121 (VPAFLGKLWA…QLLERVRRKV (105 aa)) mediate DNA binding. The tract at residues 129 to 203 (GRWRPEDLGR…GPLQAGPSNA (75 aa)) is hydrophobic repeat HR-A/B. An interactions with DUSP26, MAPK1 and MAPK2 region spans residues 245-322 (LPETNLGLSP…ECDFCVTAPP (78 aa)). The tract at residues 246 to 285 (PETNLGLSPHRARGPIISDIPEDSPSPEGTRLSPSSDGRR) is disordered. Lys-293 participates in a covalent cross-link: Glycyl lysine isopeptide (Lys-Gly) (interchain with G-Cter in SUMO). Position 298 is a phosphoserine (Ser-298). Residues 337–400 (GSFSPEGPRN…PAGPLDVLGP (64 aa)) form a disordered region. The hydrophobic repeat HR-C stretch occupies residues 364 to 389 (LGLESGDRSPESLLPPMLLQPPQESV). A compositionally biased stretch (low complexity) spans 374 to 388 (ESLLPPMLLQPPQES).

This sequence belongs to the HSF family. In terms of assembly, homotrimer. Exhibits constitutive DNA binding and forms trimers even in the absence of stress. Interacts with ALKBH4, DUSP26, MAPK1, MAPK2, MAPK8 and MAP kinase p38. In terms of processing, phosphorylated mainly on serine residues. Phosphorylation on Ser-298 promotes sumoylation on Lys-293. Post-translationally, isoform HSF4B is constitutively sumoylated. Sumoylation represses the transcriptional activity and is promoted by phosphorylation on Ser-298. HSFA is not sumoylated. As to expression, expressed in heart, skeletal muscle, eye and brain, and at much lower levels in some other tissues.

It is found in the nucleus. In terms of biological role, heat-shock transcription factor that specifically binds heat shock promoter elements (HSE). Required for denucleation and organelle rupture and degradation that occur during eye lens terminal differentiation, when fiber cells that compose the lens degrade all membrane-bound organelles in order to provide lens with transparency to allow the passage of light. In this process, may regulate denucleation of lens fiber cells in part by activating DNASE2B transcription. May be involved in DNA repair through the transcriptional regulation of RAD51. May up-regulate p53/TP53 protein in eye lens fiber cells, possibly through protein stabilization. In the eye lens, controls the expression of alpha-crystallin B chain/CRYAB and consequently may be involved in the regulation of lysosomal acidification. Its function is as follows. Transcriptional repressor. Functionally, transcriptional activator. This Homo sapiens (Human) protein is Heat shock factor protein 4 (HSF4).